A 317-amino-acid chain; its full sequence is Nucleoside ABC transporter permease protein NupC (317 aa).

Helical transmembrane passes span 9–29, 35–55, 62–82, 98–118, 132–151, 155–172, 203–223, 225–245, 251–271, and 286–306; these read IIVANMLIYSTPLIFTSIGGV, GIVNVGLEGIMTIGAFSSVVF, MFGSMTPWLSILFGALIGALF, IVSGTVLNLMAPALGVFLLQV, GYWNVPLLSNIPVIGKIFFT, LPGFLAIVVAILAWYVLF, AGVLLSGVLGGVGGAIYAQAI, GNFSVSTIAGQGFISLAAMIF, IGAMLSSLLFGLFTSLAVVGG, and MAPYVFTIIVLALFLGKAIAP.

It belongs to the binding-protein-dependent transport system permease family. In terms of assembly, the complex is composed of two ATP-binding proteins (NupA), two transmembrane proteins (NupB and NupC) and a solute-binding protein (BmpA).

The protein resides in the cell membrane. Functionally, part of an ABC transporter complex involved in the uptake of all common nucleosides. Responsible for the translocation of the substrate across the membrane. The sequence is that of Nucleoside ABC transporter permease protein NupC from Lactococcus lactis subsp. cremoris (strain MG1363).